The primary structure comprises 441 residues: Ribosomal protein uS12 methylthiotransferase RimO (441 aa).

An MTTase N-terminal domain is found at 8 to 118 (PKIGFVSLGC…VLQHVHHYVP (111 aa)). The [4Fe-4S] cluster site is built by C17, C53, C82, C150, C154, and C157. A Radical SAM core domain is found at 136–373 (LTPRHYAYLK…MQLQQQISAE (238 aa)). Residues 376-441 (QEKVGREILV…DEYDLWGSRV (66 aa)) enclose the TRAM domain.

This sequence belongs to the methylthiotransferase family. RimO subfamily. The cofactor is [4Fe-4S] cluster.

It is found in the cytoplasm. The enzyme catalyses L-aspartate(89)-[ribosomal protein uS12]-hydrogen + (sulfur carrier)-SH + AH2 + 2 S-adenosyl-L-methionine = 3-methylsulfanyl-L-aspartate(89)-[ribosomal protein uS12]-hydrogen + (sulfur carrier)-H + 5'-deoxyadenosine + L-methionine + A + S-adenosyl-L-homocysteine + 2 H(+). In terms of biological role, catalyzes the methylthiolation of an aspartic acid residue of ribosomal protein uS12. The sequence is that of Ribosomal protein uS12 methylthiotransferase RimO from Salmonella paratyphi A (strain ATCC 9150 / SARB42).